The chain runs to 370 residues: Histidinol-phosphate aminotransferase 2 (370 aa).

Lys230 is subject to N6-(pyridoxal phosphate)lysine.

Belongs to the class-II pyridoxal-phosphate-dependent aminotransferase family. Histidinol-phosphate aminotransferase subfamily. In terms of assembly, homodimer. It depends on pyridoxal 5'-phosphate as a cofactor.

It carries out the reaction L-histidinol phosphate + 2-oxoglutarate = 3-(imidazol-4-yl)-2-oxopropyl phosphate + L-glutamate. It functions in the pathway amino-acid biosynthesis; L-histidine biosynthesis; L-histidine from 5-phospho-alpha-D-ribose 1-diphosphate: step 7/9. The sequence is that of Histidinol-phosphate aminotransferase 2 from Pseudomonas fluorescens (strain Pf0-1).